The sequence spans 5400 residues: Midasin (5400 aa).

6 AAA-ATPase protomer regions span residues 345–571 (MVSL…HGLP), 656–986 (LLEK…AIKA), 1050–1308 (SYVK…EKVV), 1347–1652 (SMRR…VNMA), 1769–2023 (VLRV…VLRI), and 2074–2347 (IRQN…MMGP). Residues 360–367 (GPSGSGKS), 674–681 (GETGTGKT), 1079–1086 (GPTSSGKT), 1369–1376 (GDTGGGKT), 1786–1793 (GSPGVGKT), and 2095–2102 (GPSSSGKT) contribute to the ATP site. Residues 2435-4569 (IYLSSLGVTD…DGVGAKDVSD (2135 aa)) form a linker region. Coiled coils occupy residues 2896–2916 (LERLKLEKKRLEDKMGFSEID), 3233–3253 (AMKITCKLLKLEEKISSLELN), and 3896–3916 (MEQLDLNRKNVETELKEVLKL). Disordered stretches follow at residues 4540–4890 (EEDD…SSSN), 4905–4929 (TLTDNLPKMEFPQNQSSTAQQTKVN), and 4990–5069 (QVNT…RMDS). The span at 4576–4612 (QLHGTDKKEEEEKEQDDVLGKNKGIEMSDEFDGKEYS) shows a compositional bias: basic and acidic residues. A compositionally biased stretch (acidic residues) spans 4613-4631 (VSEDEEEDKEDEGSEDEPL). 2 stretches are compositionally biased toward basic and acidic residues: residues 4641-4652 (DAEKADEKPWNK) and 4661-4687 (MNEKNESGPSIVDKDTRSRELRAKDDG). Acidic residues-rich tracts occupy residues 4688-4698 (VETADEPEESN) and 4706-4721 (GNDENVEQDDFDDTDN). Over residues 4722–4732 (LEEKIQTKEEA) the composition is skewed to basic and acidic residues. The segment covering 4740–4750 (VDNEQIDDDME) has biased composition (acidic residues). Basic and acidic residues predominate over residues 4751 to 4762 (MDKTEEVEKEDA). Positions 4779 to 4798 (GENDQEETQEPSEENMEAEA) are enriched in acidic residues. The span at 4799–4810 (EDRCGSPQKEEP) shows a compositional bias: basic and acidic residues. A compositionally biased stretch (acidic residues) spans 4811-4822 (GNDLEQEPETEP). A compositionally biased stretch (basic and acidic residues) spans 4823–4834 (IEGKEVMSEDMM). Polar residues-rich tracts occupy residues 4839 to 4855 (RNDNISGVESGSQNPHG), 4864 to 4874 (TAPQENLSATD), 4916 to 4928 (PQNQSSTAQQTKV), and 5030 to 5040 (SKPSISNSIAE). The Nuclear localization signal motif lies at 5157 to 5164 (MKKVIPYI). In terms of domain architecture, VWFA spans 5186-5387 (QVVIAVDDSR…EALPRTLGDV (202 aa)). Residues 5271-5291 (VVNLLRNMNEMLENLASTRRQ) adopt a coiled-coil conformation.

This sequence belongs to the midasin family. Associates with pre-60S ribosomes in the nucleoplasm. Constitutively and ubiquitously expressed. Mostly observed in the shoot apex and root tip, and, to a lower extent, in mature seeds, seedling (excluding the hypocotyl), roots, stems, leaves and flowers.

It is found in the nucleus. Its subcellular location is the nucleolus. It localises to the nucleoplasm. Nuclear chaperone required for maturation and nuclear export of pre-60S ribosome subunits. Functions at successive maturation steps to remove ribosomal factors at critical transition points, first driving the exit of early pre-60S particles from the nucleolus and then driving late pre-60S particles from the nucleus. Required for female gametophyte development. Involved in the expression regulation of genes related to plant growth and development. This chain is Midasin, found in Arabidopsis thaliana (Mouse-ear cress).